Here is a 547-residue protein sequence, read N- to C-terminus: Chaperonin GroEL (547 aa).

Residues 30–33 (TLGP), Lys51, 87–91 (DGTTT), Gly415, and Asp495 contribute to the ATP site.

This sequence belongs to the chaperonin (HSP60) family. In terms of assembly, forms a cylinder of 14 subunits composed of two heptameric rings stacked back-to-back. Interacts with the co-chaperonin GroES.

The protein resides in the cytoplasm. It carries out the reaction ATP + H2O + a folded polypeptide = ADP + phosphate + an unfolded polypeptide.. Its function is as follows. Together with its co-chaperonin GroES, plays an essential role in assisting protein folding. The GroEL-GroES system forms a nano-cage that allows encapsulation of the non-native substrate proteins and provides a physical environment optimized to promote and accelerate protein folding. This is Chaperonin GroEL from Aggregatibacter actinomycetemcomitans (Actinobacillus actinomycetemcomitans).